The chain runs to 489 residues: Blue-light-activated histidine kinase (489 aa).

The 75-residue stretch at 19 to 93 folds into the PAS domain; sequence ATDPFRAAVE…AIKSAIAAEK (75 aa). Position 69 is an S-4a-FMN cysteine (Cys-69). PAC domains follow at residues 93 to 147 and 232 to 281; these read KPID…ELEK and YSIE…NKAL. Residues 259-341 are HWE histidine kinase domain; that stretch reads NPLVLGIVQD…LLKENWAGAT (83 aa). His-288 is modified (phosphohistidine; by autocatalysis).

In terms of processing, FMN binds covalently to cysteine after exposure to blue light and this bond is spontaneously broken in the dark.

The enzyme catalyses ATP + protein L-histidine = ADP + protein N-phospho-L-histidine.. In terms of biological role, photosensitive kinase that is involved in increased bacterial virulence upon exposure to light. Once ejected from an infected animal host, sunlight acts as an environmental signal that increases the virulence of the bacterium, preparing it for infection of the next host. This photoreceptor protein is directly related to the bacterium's survival and replication within host macrophages, as it is required for optimal replication of bacteria inside macrophages. The polypeptide is Blue-light-activated histidine kinase (Brucella abortus (strain 2308)).